The sequence spans 59 residues: Three-finger toxin MS1 (59 aa).

4 disulfide bridges follow: cysteine 3/cysteine 22, cysteine 17/cysteine 39, cysteine 41/cysteine 52, and cysteine 53/cysteine 58.

It belongs to the three-finger toxin family. Short-chain subfamily. Type I alpha-neurotoxin sub-subfamily. As to expression, expressed by the venom gland.

Its subcellular location is the secreted. Produces peripheral paralysis by blocking neuromuscular transmission at the postsynaptic site. Binds to and inhibits the endogenous nicotinic acetylcholine receptors (nAChR) in human rhabdomyosarcoma TE 671 cell line with an IC(50) of 48.2 mM. This neurotoxin is lethal to mice by intraperitoneal injection and to zebrafish by injection at the back of the dorsolateral region. This Micrurus surinamensis (Surinam coral snake) protein is Three-finger toxin MS1.